The following is a 442-amino-acid chain: Histidinol dehydrogenase (442 aa).

The NAD(+) site is built by tyrosine 142, glutamine 204, and asparagine 227. Serine 250, glutamine 272, and histidine 275 together coordinate substrate. Glutamine 272 and histidine 275 together coordinate Zn(2+). Catalysis depends on proton acceptor residues glutamate 340 and histidine 341. 4 residues coordinate substrate: histidine 341, aspartate 374, glutamate 428, and histidine 433. Zn(2+) is bound at residue aspartate 374. Histidine 433 lines the Zn(2+) pocket.

The protein belongs to the histidinol dehydrogenase family. Zn(2+) is required as a cofactor.

The catalysed reaction is L-histidinol + 2 NAD(+) + H2O = L-histidine + 2 NADH + 3 H(+). It functions in the pathway amino-acid biosynthesis; L-histidine biosynthesis; L-histidine from 5-phospho-alpha-D-ribose 1-diphosphate: step 9/9. Functionally, catalyzes the sequential NAD-dependent oxidations of L-histidinol to L-histidinaldehyde and then to L-histidine. This is Histidinol dehydrogenase from Prochlorococcus marinus (strain MIT 9313).